Reading from the N-terminus, the 445-residue chain is Phosphoglucosamine mutase (445 aa).

The Phosphoserine intermediate role is filled by S102. Positions 102, 241, 243, and 245 each coordinate Mg(2+). At S102 the chain carries Phosphoserine.

Belongs to the phosphohexose mutase family. The cofactor is Mg(2+). In terms of processing, activated by phosphorylation.

The catalysed reaction is alpha-D-glucosamine 1-phosphate = D-glucosamine 6-phosphate. Its function is as follows. Catalyzes the conversion of glucosamine-6-phosphate to glucosamine-1-phosphate. This Escherichia coli O81 (strain ED1a) protein is Phosphoglucosamine mutase.